We begin with the raw amino-acid sequence, 231 residues long: NDR1/HIN1-like protein 3 (231 aa).

Residues 47–67 form a helical membrane-spanning segment; it reads VIFNILITIAVLLGIAALIIW. Asn102, Asn135, Asn145, and Asn215 each carry an N-linked (GlcNAc...) asparagine glycan.

In terms of assembly, may form oligomers or be a component of larger protein complex in plasma membranes. Post-translationally, glycosylated. As to expression, expressed in roots, young and senescing leaves, cauline leaves, stems and siliques.

It is found in the cell membrane. In terms of biological role, confers resistance to Pseudomonas syringae pv. tomato DC3000 (Pst DC3000). The sequence is that of NDR1/HIN1-like protein 3 from Arabidopsis thaliana (Mouse-ear cress).